A 266-amino-acid polypeptide reads, in one-letter code: Large ribosomal subunit protein uL2c (266 aa).

The segment at Met1 to Ser24 is disordered. Polar residues predominate over residues Lys7–Ser24.

This sequence belongs to the universal ribosomal protein uL2 family. As to quaternary structure, part of the 50S ribosomal subunit.

It localises to the plastid. Its subcellular location is the chloroplast. This is Large ribosomal subunit protein uL2c (rpl2) from Nicotiana debneyi (Debney's tobacco).